The sequence spans 551 residues: Scaffold protein D13 ortholog (551 aa).

The protein belongs to the poxviridae protein D13 family. As to quaternary structure, homotrimer. Self-assembles to form a layer. Interacts with A17 (via N-terminus); this interaction is necessary for D13 association with membranes.

The protein localises to the membrane. In terms of biological role, scaffold protein which forms a transitory spherical honeycomb lattice providing curvature and rigidity to the convex membrane of crescent and immature virions (IV). This association occurs concomitantly with viral membrane formation. Targeted by the drug rifampicin, which prevents the formation of this lattice, and hence virus morphogenesis. In the presence of rifampicin, irregularly shaped membranes that lack the honeycomb layer accumulate around areas of electron-dense viroplasm. This layer is lost from virions during maturation from IV to mature virion (MV), through the proteolysis of A17 N-terminus. This Sus scrofa (Pig) protein is Scaffold protein D13 ortholog.